A 256-amino-acid polypeptide reads, in one-letter code: Imidazole glycerol phosphate synthase subunit HisF (256 aa).

Residues aspartate 12 and aspartate 131 contribute to the active site.

Belongs to the HisA/HisF family. In terms of assembly, heterodimer of HisH and HisF.

It is found in the cytoplasm. The catalysed reaction is 5-[(5-phospho-1-deoxy-D-ribulos-1-ylimino)methylamino]-1-(5-phospho-beta-D-ribosyl)imidazole-4-carboxamide + L-glutamine = D-erythro-1-(imidazol-4-yl)glycerol 3-phosphate + 5-amino-1-(5-phospho-beta-D-ribosyl)imidazole-4-carboxamide + L-glutamate + H(+). It functions in the pathway amino-acid biosynthesis; L-histidine biosynthesis; L-histidine from 5-phospho-alpha-D-ribose 1-diphosphate: step 5/9. In terms of biological role, IGPS catalyzes the conversion of PRFAR and glutamine to IGP, AICAR and glutamate. The HisF subunit catalyzes the cyclization activity that produces IGP and AICAR from PRFAR using the ammonia provided by the HisH subunit. The sequence is that of Imidazole glycerol phosphate synthase subunit HisF from Renibacterium salmoninarum (strain ATCC 33209 / DSM 20767 / JCM 11484 / NBRC 15589 / NCIMB 2235).